The primary structure comprises 80 residues: Exodeoxyribonuclease 7 small subunit (80 aa).

It belongs to the XseB family. Heterooligomer composed of large and small subunits.

It localises to the cytoplasm. The catalysed reaction is Exonucleolytic cleavage in either 5'- to 3'- or 3'- to 5'-direction to yield nucleoside 5'-phosphates.. Functionally, bidirectionally degrades single-stranded DNA into large acid-insoluble oligonucleotides, which are then degraded further into small acid-soluble oligonucleotides. The sequence is that of Exodeoxyribonuclease 7 small subunit from Pseudomonas putida (strain GB-1).